The following is a 216-amino-acid chain: Thiopurine S-methyltransferase (216 aa).

Residues tryptophan 10, leucine 45, glutamate 66, and arginine 123 each contribute to the S-adenosyl-L-methionine site.

The protein belongs to the class I-like SAM-binding methyltransferase superfamily. TPMT family.

Its subcellular location is the cytoplasm. It carries out the reaction S-adenosyl-L-methionine + a thiopurine = S-adenosyl-L-homocysteine + a thiopurine S-methylether.. In Pseudomonas putida (strain ATCC 47054 / DSM 6125 / CFBP 8728 / NCIMB 11950 / KT2440), this protein is Thiopurine S-methyltransferase.